An 87-amino-acid chain; its full sequence is Small ribosomal subunit protein bS20 (87 aa).

The segment at 1–27 is disordered; that stretch reads MANSVQATKRARQAEKHRQHNAGMRAA. Positions 9-20 are enriched in basic residues; sequence KRARQAEKHRQH.

It belongs to the bacterial ribosomal protein bS20 family.

Its function is as follows. Binds directly to 16S ribosomal RNA. The chain is Small ribosomal subunit protein bS20 from Hydrogenovibrio crunogenus (strain DSM 25203 / XCL-2) (Thiomicrospira crunogena).